The chain runs to 670 residues: Microtubule-associated protein ssm4 (670 aa).

The region spanning 23-65 is the CAP-Gly domain; sequence GSTDFESGIWLGVELLNGKGKNDGSVKGKRYFSCEKGKGIFVR. Coiled coils occupy residues 209–254 and 404–582; these read KSEL…KNSI and VKTR…KLAD. S460 carries the post-translational modification Phosphoserine. Phosphothreonine is present on T606.

It localises to the cytoplasm. The protein localises to the cytoskeleton. Its subcellular location is the spindle. Its function is as follows. Binds to nuclear microtubules with the effect of either modifying their structure or function. This then promotes meiotic nuclear division. The polypeptide is Microtubule-associated protein ssm4 (ssm4) (Schizosaccharomyces pombe (strain 972 / ATCC 24843) (Fission yeast)).